Consider the following 163-residue polypeptide: SKP1-like protein 3 (163 aa).

Positions 105–163 are interaction with the F-box domain of F-box proteins; that stretch reads LRAANYLNISGLLDLTCKAVADQMRGKTPAQMREHFNIKNDYTPEEEAEVRNENRWAFE.

Belongs to the SKP1 family. As to quaternary structure, part of a SCF (SKP1-cullin-F-box) protein ligase complex. Interacts with ADO3/FKF1 and At3g61590. As to expression, highly expressed in siliques.

The protein localises to the nucleus. The protein operates within protein modification; protein ubiquitination. In terms of biological role, involved in ubiquitination and subsequent proteasomal degradation of target proteins. Together with CUL1, RBX1 and a F-box protein, it forms a SCF E3 ubiquitin ligase complex. The functional specificity of this complex depends on the type of F-box protein. In the SCF complex, it serves as an adapter that links the F-box protein to CUL1. The protein is SKP1-like protein 3 (ASK3) of Arabidopsis thaliana (Mouse-ear cress).